The primary structure comprises 119 residues: Aspartate 1-decarboxylase (119 aa).

Residue S25 is the Schiff-base intermediate with substrate; via pyruvic acid of the active site. S25 is modified (pyruvic acid (Ser)). A substrate-binding site is contributed by T57. The active-site Proton donor is the Y58. 73-75 (GAA) is a binding site for substrate.

The protein belongs to the PanD family. As to quaternary structure, heterooctamer of four alpha and four beta subunits. Requires pyruvate as cofactor. In terms of processing, is synthesized initially as an inactive proenzyme, which is activated by self-cleavage at a specific serine bond to produce a beta-subunit with a hydroxyl group at its C-terminus and an alpha-subunit with a pyruvoyl group at its N-terminus.

The protein localises to the cytoplasm. It carries out the reaction L-aspartate + H(+) = beta-alanine + CO2. Its pathway is cofactor biosynthesis; (R)-pantothenate biosynthesis; beta-alanine from L-aspartate: step 1/1. In terms of biological role, catalyzes the pyruvoyl-dependent decarboxylation of aspartate to produce beta-alanine. The chain is Aspartate 1-decarboxylase from Thermosipho melanesiensis (strain DSM 12029 / CIP 104789 / BI429).